The following is a 278-amino-acid chain: Nucleotide-binding protein Tlet_0523 (278 aa).

9-16 (GLSGAGKS) contacts ATP. Residue 58–61 (DIRS) participates in GTP binding.

Belongs to the RapZ-like family.

In terms of biological role, displays ATPase and GTPase activities. This is Nucleotide-binding protein Tlet_0523 from Pseudothermotoga lettingae (strain ATCC BAA-301 / DSM 14385 / NBRC 107922 / TMO) (Thermotoga lettingae).